The primary structure comprises 88 residues: MAHKKAGGSSRNGRDSDGRRLGVKKFGNEAVIAGNIIVRQRGTRWHPGANVGMGRDHTLFALTAGRVQFAKKHGRAYVTVVPAQAAAE.

Residues 1 to 21 (MAHKKAGGSSRNGRDSDGRRL) are disordered.

Belongs to the bacterial ribosomal protein bL27 family.

The sequence is that of Large ribosomal subunit protein bL27 from Methylobacterium nodulans (strain LMG 21967 / CNCM I-2342 / ORS 2060).